We begin with the raw amino-acid sequence, 265 residues long: Serine protease harobin (265 aa).

The first 18 residues, 1–18, serve as a signal peptide directing secretion; sequence MPLIRVLASLLILQLSYG. A propeptide spanning residues 19-33 is cleaved from the precursor; that stretch reads KSLDNGAKAITSLDR. Residues 34 to 257 enclose the Peptidase S1 domain; it reads IIGGFECNPS…YKDWIEGIIA (224 aa). 7 disulfide bridges follow: cysteine 40–cysteine 172, cysteine 59–cysteine 75, cysteine 106–cysteine 152, cysteine 107–cysteine 264, cysteine 151–cysteine 218, cysteine 183–cysteine 197, and cysteine 208–cysteine 233. Histidine 74 serves as the catalytic Charge relay system. N-linked (GlcNAc...) asparagine glycosylation occurs at asparagine 112. Aspartate 119 acts as the Charge relay system in catalysis. An N-linked (GlcNAc...) asparagine glycan is attached at asparagine 130. The active-site Charge relay system is serine 212.

The protein belongs to the peptidase S1 family. Snake venom subfamily. As to quaternary structure, monomer. Harobin contains three additional Cys residues than other snake venom serine proteases, suggesting an additional disulfide bond. In addition, it is more stable than other snake 6-disulfide-bond serine proteases, since it is less sensitive to DTT. As to expression, expressed by the venom gland.

Its subcellular location is the secreted. With respect to regulation, inhibited by PMSF. Functionally, serine protein with fibrinolytic and fibrinogenolytic activities. Degrades Bbeta-chain (FGB) of fibrinogen first and then the Aalpha-chain (FGA). Gamma-chain (FGG) are also digested on prolonged incubation. In vitro, it cleaves high molecular weight (HMW) kininogen (KNG) releasing bradykinin that promotes vasodilation. In vitro and in vivo, it cleaves angiotensin-2 (AGT). This explains the reduction of blood pressure in hypertensive rats. Also has antithrombotic effects on thrombosis animal models. The chain is Serine protease harobin from Hydrophis hardwickii (Hardwick's spine-bellied seasnake).